The chain runs to 1574 residues: Multiple epidermal growth factor-like domains protein 6 (1574 aa).

The signal sequence occupies residues 1-27 (MPVRAEARAAWRVVALALLLLPAMPAA). The region spanning 40-122 (MPHVCAEQKL…QKPGQEGCLS (83 aa)) is the EMI domain. 99 cysteine pairs are disulfide-bonded: Cys44/Cys108, Cys74/Cys80, Cys107/Cys120, Cys127/Cys138, Cys134/Cys147, Cys149/Cys162, Cys168/Cys179, Cys175/Cys188, Cys190/Cys203, Cys209/Cys220, Cys216/Cys230, Cys232/Cys245, Cys251/Cys262, Cys258/Cys271, Cys273/Cys286, Cys292/Cys303, Cys299/Cys312, Cys314/Cys327, Cys338/Cys349, Cys345/Cys358, Cys360/Cys373, Cys379/Cys389, Cys385/Cys398, Cys400/Cys411, Cys419/Cys430, Cys426/Cys439, Cys441/Cys454, Cys524/Cys537, Cys531/Cys544, Cys546/Cys555, Cys568/Cys580, Cys574/Cys587, Cys589/Cys598, Cys611/Cys623, Cys617/Cys630, Cys632/Cys641, Cys654/Cys668, Cys660/Cys675, Cys677/Cys686, Cys699/Cys711, Cys705/Cys718, Cys722/Cys731, Cys744/Cys755, Cys750/Cys762, Cys764/Cys773, Cys786/Cys799, Cys793/Cys806, Cys808/Cys817, Cys830/Cys842, Cys836/Cys849, Cys851/Cys860, Cys873/Cys886, Cys879/Cys893, Cys895/Cys904, Cys917/Cys929, Cys923/Cys936, Cys938/Cys947, Cys960/Cys972, Cys966/Cys979, Cys981/Cys990, Cys1003/Cys1015, Cys1009/Cys1022, Cys1024/Cys1033, Cys1046/Cys1058, Cys1052/Cys1065, Cys1067/Cys1076, Cys1089/Cys1101, Cys1095/Cys1108, Cys1110/Cys1119, Cys1132/Cys1144, Cys1138/Cys1151, Cys1153/Cys1162, Cys1175/Cys1187, Cys1181/Cys1194, Cys1196/Cys1205, Cys1218/Cys1231, Cys1224/Cys1238, Cys1240/Cys1249, Cys1262/Cys1274, Cys1268/Cys1281, Cys1283/Cys1292, Cys1305/Cys1317, Cys1311/Cys1324, Cys1326/Cys1335, Cys1348/Cys1360, Cys1354/Cys1367, Cys1369/Cys1378, Cys1391/Cys1403, Cys1397/Cys1410, Cys1412/Cys1421, Cys1434/Cys1446, Cys1440/Cys1453, Cys1455/Cys1464, Cys1477/Cys1489, Cys1483/Cys1496, Cys1498/Cys1507, Cys1520/Cys1532, Cys1526/Cys1539, and Cys1541/Cys1550. The EGF-like 1; calcium-binding domain maps to 123 to 163 (DVDECASANGGCEGPCCNTVGGFYCRCPPGYQLQGDGKTCQ). One can recognise an EGF-like 2; calcium-binding domain in the interval 164–204 (DVDECRAHNGGCQHRCVNTPGSYLCECKPGFRLHTDGRTCL). 2 EGF-like domains span residues 205–246 (AISS…RRCV) and 247–287 (RRSP…KTCE). The EGF-like 5; calcium-binding domain maps to 288-328 (DVDECALGLAQCAHGCLNTQGSFKCVCHAGYELGADGRQCY). EGF-like domains follow at residues 334 to 374 (IVNS…KTCI) and 375 to 412 (DIDD…DGCG). The region spanning 415–455 (DVDECASGHGGCEHHCSNLAGSFQCFCEAGYRLDEDRRGCT) is the EGF-like 8; calcium-binding domain. EGF-like domains are found at residues 520 to 556 (FGHD…IICN), 564 to 599 (FGKN…AHCE), 607 to 642 (YGKH…RFCH), 650 to 687 (FGPG…ERCQ), 695 to 732 (FGPG…EDCG), 740 to 774 (FGVN…EDCG), 782 to 818 (WGLG…SRCQ), 826 to 861 (YGTG…LSCQ), 869 to 905 (WGPD…PRCE), 913 to 948 (YGPS…SFCE), 956 to 991 (FGLD…PRCA), 999 to 1034 (FGLN…PTCL), 1042 to 1077 (YGKN…LACE), 1085 to 1120 (YAAG…DKCQ), 1128 to 1163 (FGVH…PHCE), 1171 to 1206 (FGEA…LSCE), 1214 to 1250 (FGKD…TGCL), 1258 to 1293 (YGPG…ADCS), 1301 to 1336 (FGPS…VRCE), 1344 to 1379 (FGKG…PHCE), 1387 to 1422 (YGAA…QACE), 1430 to 1465 (HGPG…QFCE), 1473 to 1508 (FGDG…AACD), and 1516 to 1551 (FGPG…PTCR). Residues 1555 to 1568 (TQISSSRPAPQHPS) are compositionally biased toward polar residues. The interval 1555–1574 (TQISSSRPAPQHPSSRAMKH) is disordered.

In terms of tissue distribution, expressed in lung.

It is found in the secreted. In Rattus norvegicus (Rat), this protein is Multiple epidermal growth factor-like domains protein 6 (Megf6).